Consider the following 608-residue polypeptide: RAS guanyl-releasing protein 2 (608 aa).

The N-terminal Ras-GEF domain occupies 4-126; the sequence is TLDLDKGCTV…SLIDIENVPT (123 aa). Phosphoserine is present on residues serine 116, serine 117, and serine 147. The Ras-GEF domain maps to 154-387; the sequence is EPLELAAHLT…YQLSLQREPR (234 aa). Residues 382–407 are disordered; it reads LQREPRSKSSPTSPTTCTPPPRPPVL. EF-hand domains follow at residues 426–461 and 463–490; these read HIEK…FPYL and AFGD…SSSM. Positions 439, 441, 443, 445, 450, 468, 470, 472, 474, and 479 each coordinate Ca(2+). Residues 498-548 form a Phorbol-ester/DAG-type zinc finger; the sequence is VHNFHESNSLRPVACRHCKALILGIYKQGLKCRACGVNCHKQCKDRLSVEC. Phosphoserine occurs at positions 554 and 575. Residues 556 to 591 are disordered; the sequence is SLEGSAPSPSPTHTHHRAFSFSLPRPGRRGSRPPEI.

It belongs to the RASGRP family. As to quaternary structure, forms a signaling complex with RAP1 and BRAF. Interacts with RAP1. Interacts with F-actin.

It is found in the cytoplasm. It localises to the cytosol. The protein localises to the cell membrane. The protein resides in the synapse. Its subcellular location is the synaptosome. It is found in the cell projection. It localises to the ruffle membrane. Functions as a calcium- and DAG-regulated nucleotide exchange factor specifically activating Rap through the exchange of bound GDP for GTP. May also activate other GTPases such as RRAS, RRAS2, NRAS, KRAS but not HRAS. Functions in aggregation of platelets and adhesion of T-lymphocytes and neutrophils probably through inside-out integrin activation. May function in the muscarinic acetylcholine receptor M1/CHRM1 signaling pathway. This Bos taurus (Bovine) protein is RAS guanyl-releasing protein 2 (RASGRP2).